A 499-amino-acid chain; its full sequence is Protein flp (499 aa).

4 helical membrane passes run 6 to 26 (LYFLSISIIILVAISIAIYIT), 389 to 409 (FNIVTVLMTTLILLAFIFSAY), 433 to 453 (LTLCLCIAIALILYALPYLIL), and 471 to 491 (LTLTTAFIALFSMLITLLLIL).

It localises to the cell membrane. Functionally, its precise function is unknown. Has no penicillin-binding activity and is not involved in methicillin resistance. The chain is Protein flp (flp) from Staphylococcus aureus (strain MRSA252).